The following is a 136-amino-acid chain: Large ribosomal subunit protein uL16 (136 aa).

It belongs to the universal ribosomal protein uL16 family. In terms of assembly, part of the 50S ribosomal subunit.

Functionally, binds 23S rRNA and is also seen to make contacts with the A and possibly P site tRNAs. This Vibrio campbellii (strain ATCC BAA-1116) protein is Large ribosomal subunit protein uL16.